Reading from the N-terminus, the 310-residue chain is Coproporphyrin III ferrochelatase (310 aa).

Residues His184 and Glu265 each contribute to the Fe(2+) site.

The protein belongs to the ferrochelatase family.

It is found in the cytoplasm. The enzyme catalyses Fe-coproporphyrin III + 2 H(+) = coproporphyrin III + Fe(2+). Its pathway is porphyrin-containing compound metabolism; protoheme biosynthesis. Functionally, involved in coproporphyrin-dependent heme b biosynthesis. Catalyzes the insertion of ferrous iron into coproporphyrin III to form Fe-coproporphyrin III. This chain is Coproporphyrin III ferrochelatase, found in Limosilactobacillus reuteri (strain DSM 20016) (Lactobacillus reuteri).